Here is a 463-residue protein sequence, read N- to C-terminus: D(2)-like dopamine receptor (463 aa).

Residues 1-35 (MDVFTQYAYNDSIFDNGTWSANETTKDETHPYNYY) lie on the Extracellular side of the membrane. Asn-10, Asn-16, and Asn-22 each carry an N-linked (GlcNAc...) asparagine glycan. Residues 36–58 (AMLLTLLIFVIVFGNVLVCMAVS) form a helical membrane-spanning segment. Topologically, residues 59 to 68 (REKALQTTTN) are cytoplasmic. A helical transmembrane segment spans residues 69–91 (YLIVSLAVADLLVATLVMPWVVY). Topologically, residues 92–106 (LEVVGEWRFSKIHCD) are extracellular. A disulfide bridge connects residues Cys-105 and Cys-183. A helical membrane pass occupies residues 107 to 128 (IFVTLDVMMCTASILNLCAISI). Topologically, residues 129–149 (DRYTAVAMPMLYNTRYSSRRR) are cytoplasmic. The helical transmembrane segment at 150 to 170 (VTVMISVVWVLSFAISCPLLF) threads the bilayer. Topologically, residues 171–189 (GLNNTATRDQSLCFIANPA) are extracellular. The chain crosses the membrane as a helical span at residues 190-214 (FVVYSSIVSFYVPFIVTLLVYVQIY). Residues 215–392 (VVLRKRRKRV…SQQKEKKATQ (178 aa)) lie on the Cytoplasmic side of the membrane. The segment at 295 to 362 (CGGSHKQPPP…KEAQGNPAPV (68 aa)) is disordered. A compositionally biased stretch (polar residues) spans 315 to 329 (PATSHQLLMSTKANA). Positions 341–353 (EGQRTEKNGDPTK) are enriched in basic and acidic residues. The helical transmembrane segment at 393-414 (MLAIVLGVFIICWLPFFITHIL) threads the bilayer. Over 415 to 429 (NTHCTRCKVPAEMYN) the chain is Extracellular. Cys-418 and Cys-421 are oxidised to a cystine. Residues 430-451 (AFTWLGYVNSAVNPIIYTTFNV) traverse the membrane as a helical segment. Residues 452–463 (EFRKAFIKILHC) are Cytoplasmic-facing.

This sequence belongs to the G-protein coupled receptor 1 family.

Its subcellular location is the cell membrane. Functionally, receptor for dopamine. This is D(2)-like dopamine receptor (d215) from Takifugu rubripes (Japanese pufferfish).